The following is a 441-amino-acid chain: NADH-quinone oxidoreductase subunit D 1 (441 aa).

Belongs to the complex I 49 kDa subunit family. In terms of assembly, NDH-1 is composed of 14 different subunits. Subunits NuoB, C, D, E, F, and G constitute the peripheral sector of the complex.

It is found in the cell membrane. The catalysed reaction is a quinone + NADH + 5 H(+)(in) = a quinol + NAD(+) + 4 H(+)(out). Its function is as follows. NDH-1 shuttles electrons from NADH, via FMN and iron-sulfur (Fe-S) centers, to quinones in the respiratory chain. The immediate electron acceptor for the enzyme in this species is believed to be a menaquinone. Couples the redox reaction to proton translocation (for every two electrons transferred, four hydrogen ions are translocated across the cytoplasmic membrane), and thus conserves the redox energy in a proton gradient. The chain is NADH-quinone oxidoreductase subunit D 1 from Salinispora tropica (strain ATCC BAA-916 / DSM 44818 / JCM 13857 / NBRC 105044 / CNB-440).